The chain runs to 1029 residues: Toll-like receptor 9 (1029 aa).

The signal sequence occupies residues 1-24 (MGPYCAPHPLSLLVQAAALAAALA). Over 25–815 (EGTLPAFLPC…LCLDETLSLD (791 aa)) the chain is Extracellular. Cysteine 34 and cysteine 44 form a disulfide bridge. 46-50 (WLFLK) is a DNA binding site. LRR repeat units follow at residues 61–84 (RANV…DFVH), 86–109 (SNLR…HFPC), 121–146 (VPTL…SLVS), 149–165 (LSHT…FTGL), 166–189 (HALR…ALEV), 197–220 (LGNL…LPPS), 222–241 (DTLL…DLAN), 242–267 (LTAL…CREC), 282–305 (LSRL…WFRG), 307–331 (GRLQ…IFND), 332–355 (LTQL…HLHL), 362–385 (LVSL…TLQS), 389–412 (LPKL…IFGA), 414–439 (PSLL…LGEV), 469–492 (CNLN…MFTR), 494–517 (SRLQ…QFVP), 518–541 (LTSL…SFTE), 543–570 (PQLE…SFVA), 572–596 (LPSL…LSSA), 598–620 (LRAL…LYLC), 625–648 (LRNL…HLDN), 650–673 (PKSL…SLTV), 674–697 (LPRL…SLPP), 699–721 (IRLQ…FFVR), 722–745 (ATRL…WFGS), and 747–770 (AGTL…AFVD). A glycan (N-linked (GlcNAc...) asparagine) is linked at asparagine 63. DNA-binding positions include 71 to 76 (SNRIHH) and 94 to 108 (KWNC…MHFP). A disulfide bridge links cysteine 97 with cysteine 109. Asparagine 128 carries N-linked (GlcNAc...) asparagine glycosylation. Tyrosine 131 serves as a coordination point for DNA. An intrachain disulfide couples cysteine 177 to cysteine 183. Residue 178–180 (YYM) coordinates DNA. N-linked (GlcNAc...) asparagine glycosylation is present at asparagine 199. Tyrosine 207 lines the DNA pocket. Asparagine 209 and asparagine 241 each carry an N-linked (GlcNAc...) asparagine glycan. Cystine bridges form between cysteine 254–cysteine 267 and cysteine 257–cysteine 264. Cysteine 257 carries S-palmitoyl cysteine lipidation. Position 261 (arginine 261) interacts with DNA. Cysteine 264 carries the S-palmitoyl cysteine lipid modification. N-linked (GlcNAc...) asparagine glycans are attached at residues asparagine 339 and asparagine 380. Cysteine 469 and cysteine 498 are disulfide-bonded. Asparagine 472 and asparagine 511 each carry an N-linked (GlcNAc...) asparagine glycan. N-linked (GlcNAc...) asparagine glycosylation occurs at asparagine 565. N-linked (GlcNAc...) asparagine glycosylation is found at asparagine 667 and asparagine 692. Asparagine 729 carries N-linked (GlcNAc...) asparagine glycosylation. Intrachain disulfides connect cysteine 762–cysteine 788 and cysteine 764–cysteine 807. Residues 816–836 (CFGLSLLMVALGLAVPMLHHL) traverse the membrane as a helical segment. The Cytoplasmic segment spans residues 837–1029 (CGWDLWYCFH…NFCRGPTTAE (193 aa)). In terms of domain architecture, TIR spans 864–1009 (LLYDAVVVFD…SFWANLGIAL (146 aa)).

The protein belongs to the Toll-like receptor family. Monomer and homodimer. Exists as a monomer in the absence of unmethylated cytidine-phosphate-guanosine (CpG) ligand. Proteolytic processing of an insertion loop (Z-loop) is required for homodimerization upon binding to the unmethylated CpG ligand leading to its activation. Interacts with MYD88 via their respective TIR domains. Interacts with BTK. Interacts (via transmembrane domain) with UNC93B1. Interacts with CD300LH; the interaction may promote full activation of TLR9-triggered innate responses. Interacts with CNPY3 and HSP90B1; this interaction is required for proper folding in the endoplasmic reticulum. Interacts with SMPDL3B. Interacts with CD82; this interaction is essential for TLR9-dependent myddosome formation in response to CpG stimulation. In terms of processing, activated by proteolytic cleavage of the flexible loop between repeats LRR14 and LRR15 within the ectodomain. Cleavage requires UNC93B1. Proteolytically processed by first removing the majority of the ectodomain by either asparagine endopeptidase (AEP) or a cathepsin followed by a trimming event that is solely cathepsin mediated and required for optimal receptor signaling. Palmitoylated by ZDHHC3 in the Golgi regulates TLR9 trafficking from the Golgi to endosomes. Depalmitoylation by PPT1 controls the release of TLR9 from UNC93B1 in endosomes.

Its subcellular location is the endoplasmic reticulum membrane. It localises to the endosome. It is found in the lysosome. The protein resides in the cytoplasmic vesicle. The protein localises to the phagosome. In terms of biological role, key component of innate and adaptive immunity. TLRs (Toll-like receptors) control host immune response against pathogens through recognition of molecular patterns specific to microorganisms. TLR9 is a nucleotide-sensing TLR which is activated by unmethylated cytidine-phosphate-guanosine (CpG) dinucleotides. Acts via MYD88 and TRAF6, leading to NF-kappa-B activation, cytokine secretion and the inflammatory response. Upon CpG stimulation, induces B-cell proliferation, activation, survival and antibody production. This is Toll-like receptor 9 (TLR9) from Bos taurus (Bovine).